A 243-amino-acid chain; its full sequence is ATP synthase subunit a (243 aa).

The next 8 membrane-spanning stretches (helical) occupy residues 29–49 (NASLFMVLSTFLISLSCYVGL), 54–74 (VIPNPLQSIIEIIYDFIVSTI), 89–109 (VFTIFTFILVCNLLGILPLGF), 114–134 (HIAVTFAISMIVFISVTFIGF), 141–161 (FLHILLPQGTPMWLAPMMVLI), 177–197 (LAANMIAGHTIIKVIAGFVIN), 200–220 (IFLTPLPIAFIIILIGFEIFV), and 221–241 (AILQAYIFTVLTCVYLSDAVN).

This sequence belongs to the ATPase A chain family. In terms of assembly, F-type ATPases have 2 components, CF(1) - the catalytic core - and CF(0) - the membrane proton channel. CF(1) has five subunits: alpha(3), beta(3), gamma(1), delta(1), epsilon(1). CF(0) has three main subunits: a(1), b(2) and c(9-12). The alpha and beta chains form an alternating ring which encloses part of the gamma chain. CF(1) is attached to CF(0) by a central stalk formed by the gamma and epsilon chains, while a peripheral stalk is formed by the delta and b chains.

It is found in the cell inner membrane. Functionally, key component of the proton channel; it plays a direct role in the translocation of protons across the membrane. This chain is ATP synthase subunit a, found in Ehrlichia ruminantium (strain Welgevonden).